We begin with the raw amino-acid sequence, 466 residues long: 3-isopropylmalate dehydratase large subunit (466 aa).

The [4Fe-4S] cluster site is built by Cys-347, Cys-407, and Cys-410.

The protein belongs to the aconitase/IPM isomerase family. LeuC type 1 subfamily. As to quaternary structure, heterodimer of LeuC and LeuD. [4Fe-4S] cluster is required as a cofactor.

The enzyme catalyses (2R,3S)-3-isopropylmalate = (2S)-2-isopropylmalate. The protein operates within amino-acid biosynthesis; L-leucine biosynthesis; L-leucine from 3-methyl-2-oxobutanoate: step 2/4. Functionally, catalyzes the isomerization between 2-isopropylmalate and 3-isopropylmalate, via the formation of 2-isopropylmaleate. This chain is 3-isopropylmalate dehydratase large subunit, found in Escherichia coli (strain 55989 / EAEC).